Reading from the N-terminus, the 335-residue chain is Galactinol synthase 2 (335 aa).

Lysine 103 is a catalytic residue. Residues aspartate 119, aspartate 121, and histidine 257 each coordinate Mn(2+).

The protein belongs to the glycosyltransferase 8 family. Galactosyltransferase subfamily. It depends on a divalent metal cation as a cofactor. Accumulates in mature seeds.

It is found in the cytoplasm. It catalyses the reaction myo-inositol + UDP-alpha-D-galactose = alpha-D-galactosyl-(1-&gt;3)-1D-myo-inositol + UDP + H(+). Its function is as follows. Galactinol synthase involved in the biosynthesis of raffinose family oligosaccharides (RFOs) that function as osmoprotectants. Promotes stress tolerance of factors such as drought, chilling, salinity and methylviologen (MV), a superoxide radical generating drug, by mediating an increase in levels of the endogenous osmoprotective compounds, galactinol and raffinose. The protein is Galactinol synthase 2 (GOLS2) of Arabidopsis thaliana (Mouse-ear cress).